Here is a 225-residue protein sequence, read N- to C-terminus: J-type co-chaperone jac1, mitochondrial (225 aa).

The transit peptide at 1-49 directs the protein to the mitochondrion; the sequence is MLKQAGNQSFRPFISFAQKSLFNRQITGNHWIFARFKFYPLNKIVNYNH. The J domain occupies 61 to 137; the sequence is NFYKQFEGDI…LTRAEYILQL (77 aa). Positions 98–100 match the HSP70 binding motif; it reads HPD.

The protein belongs to the HscB family. Interacts with ssc1.

The protein localises to the mitochondrion matrix. Co-chaperone required for the assembly of iron-sulfur (Fe/S) clusters in mitochondria. Stimulates the ATPase activity of the mitochondrial Hsp70 chaperone ssc1, to mediate the transfer of iron-sulfur clusters from isu1 to grx5. This chain is J-type co-chaperone jac1, mitochondrial, found in Schizosaccharomyces pombe (strain 972 / ATCC 24843) (Fission yeast).